The following is a 364-amino-acid chain: UDP-N-acetylglucosamine--N-acetylmuramyl-(pentapeptide) pyrophosphoryl-undecaprenol N-acetylglucosamine transferase (364 aa).

UDP-N-acetyl-alpha-D-glucosamine is bound by residues 10–12 (TGG), Asn124, Ser195, Ile250, and Gln295.

The protein belongs to the glycosyltransferase 28 family. MurG subfamily.

The protein resides in the cell membrane. It carries out the reaction Mur2Ac(oyl-L-Ala-gamma-D-Glu-L-Lys-D-Ala-D-Ala)-di-trans,octa-cis-undecaprenyl diphosphate + UDP-N-acetyl-alpha-D-glucosamine = beta-D-GlcNAc-(1-&gt;4)-Mur2Ac(oyl-L-Ala-gamma-D-Glu-L-Lys-D-Ala-D-Ala)-di-trans,octa-cis-undecaprenyl diphosphate + UDP + H(+). Its pathway is cell wall biogenesis; peptidoglycan biosynthesis. Cell wall formation. Catalyzes the transfer of a GlcNAc subunit on undecaprenyl-pyrophosphoryl-MurNAc-pentapeptide (lipid intermediate I) to form undecaprenyl-pyrophosphoryl-MurNAc-(pentapeptide)GlcNAc (lipid intermediate II). This chain is UDP-N-acetylglucosamine--N-acetylmuramyl-(pentapeptide) pyrophosphoryl-undecaprenol N-acetylglucosamine transferase, found in Levilactobacillus brevis (strain ATCC 367 / BCRC 12310 / CIP 105137 / JCM 1170 / LMG 11437 / NCIMB 947 / NCTC 947) (Lactobacillus brevis).